A 212-amino-acid chain; its full sequence is FMN-dependent NAD(P)H:quinone oxidoreductase 1 (212 aa).

FMN contacts are provided by residues Ser10, 16 to 18 (SQS), and 97 to 100 (MYNF). Residues Asn99 and Tyr131 each coordinate substrate. FMN-binding positions include 145–148 (SRGG) and Glu187. Glu188 contacts substrate.

The protein belongs to the azoreductase type 1 family. Homodimer. Homotetramer formed by a dimer of dimers when the ionic strength is high. FMN serves as cofactor.

It catalyses the reaction 2 a quinone + NADPH + H(+) = 2 a 1,4-benzosemiquinone + NADP(+). The enzyme catalyses 2 a quinone + NADH + H(+) = 2 a 1,4-benzosemiquinone + NAD(+). The catalysed reaction is N,N-dimethyl-1,4-phenylenediamine + anthranilate + 2 NAD(+) = 2-(4-dimethylaminophenyl)diazenylbenzoate + 2 NADH + 2 H(+). With respect to regulation, azoreductase activity increases with salt strength. Quinone reductase that provides resistance to thiol-specific stress caused by electrophilic quinones. Shows a preference for benzoquinones. In terms of biological role, also exhibits azoreductase activity. Catalyzes the reductive cleavage of the azo bond in aromatic azo compounds to the corresponding amines. NADPH is the preferred electron donor for azoreductase activity, but it can also use NADH. Can reduce different classes of azo dyes, including the common azo dyes methyl red and p-aminoazobenzene sulfonamide (PAABSA). Can activate several azo pro-drugs used in the treatment of inflammatory bowel disease (IBD), including balsalazide, sulfasalazine and olsalazine. Also acts as a nitrodeductase, and can reduce and hence activate the nitroaromatic drug nitrofurazone, a broad spectrum antibiotic. This is FMN-dependent NAD(P)H:quinone oxidoreductase 1 from Pseudomonas aeruginosa (strain ATCC 15692 / DSM 22644 / CIP 104116 / JCM 14847 / LMG 12228 / 1C / PRS 101 / PAO1).